An 862-amino-acid polypeptide reads, in one-letter code: Molybdenum cofactor sulfurase (862 aa).

Ser-34 bears the Phosphoserine mark. Lys-264 carries the N6-(pyridoxal phosphate)lysine modification. Residue Cys-424 is part of the active site. Phosphoserine is present on Ser-517. An MOSC domain is found at 704–855; the sequence is RKTPKKGQPP…LSVGSEVLPV (152 aa).

It belongs to the class-V pyridoxal-phosphate-dependent aminotransferase family. MOCOS subfamily. Pyridoxal 5'-phosphate serves as cofactor.

It catalyses the reaction Mo-molybdopterin + L-cysteine + AH2 = thio-Mo-molybdopterin + L-alanine + A + H2O. It functions in the pathway cofactor biosynthesis; molybdopterin biosynthesis. Functionally, sulfurates the molybdenum cofactor. Sulfation of molybdenum is essential for xanthine dehydrogenase (XDH) and aldehyde oxidase (ADO) enzymes in which molybdenum cofactor is liganded by 1 oxygen and 1 sulfur atom in active form. This chain is Molybdenum cofactor sulfurase (Mocos), found in Mus musculus (Mouse).